The sequence spans 102 residues: Urease subunit beta (102 aa).

The protein belongs to the urease beta subunit family. As to quaternary structure, heterotrimer of UreA (gamma), UreB (beta) and UreC (alpha) subunits. Three heterotrimers associate to form the active enzyme.

It localises to the cytoplasm. It carries out the reaction urea + 2 H2O + H(+) = hydrogencarbonate + 2 NH4(+). It functions in the pathway nitrogen metabolism; urea degradation; CO(2) and NH(3) from urea (urease route): step 1/1. This chain is Urease subunit beta, found in Methylobacillus flagellatus (strain ATCC 51484 / DSM 6875 / VKM B-1610 / KT).